Consider the following 214-residue polypeptide: Adenylate kinase (214 aa).

ATP is bound at residue 10-15 (GAGKGT). An NMP region spans residues 30–59 (STGDMLRAAVKAGTELGKQAKEIMDAGKLV). AMP is bound by residues Thr-31, Arg-36, 57–59 (KLV), 85–88 (GFPR), and Gln-92. The interval 122–159 (GRRVHAASGRVYHVKFNPPKVEDKDDVTGEDLSVRKDD) is LID. ATP is bound by residues Arg-123 and 132–133 (VY). Residues Arg-156 and Arg-167 each coordinate AMP. Residue Arg-200 coordinates ATP.

It belongs to the adenylate kinase family. Monomer.

It is found in the cytoplasm. The catalysed reaction is AMP + ATP = 2 ADP. The protein operates within purine metabolism; AMP biosynthesis via salvage pathway; AMP from ADP: step 1/1. In terms of biological role, catalyzes the reversible transfer of the terminal phosphate group between ATP and AMP. Plays an important role in cellular energy homeostasis and in adenine nucleotide metabolism. The protein is Adenylate kinase of Pectobacterium atrosepticum (strain SCRI 1043 / ATCC BAA-672) (Erwinia carotovora subsp. atroseptica).